The chain runs to 624 residues: 1-deoxy-D-xylulose-5-phosphate synthase (624 aa).

Residues histidine 80 and 121–123 each bind thiamine diphosphate; that span reads GHS. A Mg(2+)-binding site is contributed by aspartate 152. Thiamine diphosphate is bound by residues 153–154, asparagine 181, tyrosine 289, and glutamate 371; that span reads GA. Asparagine 181 contributes to the Mg(2+) binding site.

This sequence belongs to the transketolase family. DXPS subfamily. Homodimer. Mg(2+) is required as a cofactor. Thiamine diphosphate serves as cofactor.

It carries out the reaction D-glyceraldehyde 3-phosphate + pyruvate + H(+) = 1-deoxy-D-xylulose 5-phosphate + CO2. It functions in the pathway metabolic intermediate biosynthesis; 1-deoxy-D-xylulose 5-phosphate biosynthesis; 1-deoxy-D-xylulose 5-phosphate from D-glyceraldehyde 3-phosphate and pyruvate: step 1/1. Its function is as follows. Catalyzes the acyloin condensation reaction between C atoms 2 and 3 of pyruvate and glyceraldehyde 3-phosphate to yield 1-deoxy-D-xylulose-5-phosphate (DXP). This is 1-deoxy-D-xylulose-5-phosphate synthase from Blochmanniella pennsylvanica (strain BPEN).